A 33-amino-acid chain; its full sequence is Photosystem II reaction center protein Psb30 (33 aa).

A helical transmembrane segment spans residues I5–L25.

The protein belongs to the Psb30/Ycf12 family. PSII is composed of 1 copy each of membrane proteins PsbA, PsbB, PsbC, PsbD, PsbE, PsbF, PsbH, PsbI, PsbJ, PsbK, PsbL, PsbM, PsbT, PsbX, PsbY, PsbZ, Psb30/Ycf12, peripheral proteins of the oxygen-evolving complex and a large number of cofactors. It forms dimeric complexes.

Its subcellular location is the plastid. The protein resides in the chloroplast thylakoid membrane. Functionally, a core subunit of photosystem II (PSII), probably helps stabilize the reaction center. The chain is Photosystem II reaction center protein Psb30 from Chlorella vulgaris (Green alga).